A 433-amino-acid chain; its full sequence is Phosphoribosylamine--glycine ligase (433 aa).

The ATP-grasp domain occupies 110–317 (RNFMKKYGIE…FVDIMSAVVK (208 aa)). An ATP-binding site is contributed by 137-194 (IEKLGDVAVKPSGLTGGKGVKVMGDQLPDLKAAKAYTSELLEKGSVVIEERFIGEEFT). Mg(2+)-binding residues include Q275, E287, and N289. Q275, E287, and N289 together coordinate Mn(2+).

The protein belongs to the GARS family. Requires Mg(2+) as cofactor. The cofactor is Mn(2+).

It carries out the reaction 5-phospho-beta-D-ribosylamine + glycine + ATP = N(1)-(5-phospho-beta-D-ribosyl)glycinamide + ADP + phosphate + H(+). It functions in the pathway purine metabolism; IMP biosynthesis via de novo pathway; N(1)-(5-phospho-D-ribosyl)glycinamide from 5-phospho-alpha-D-ribose 1-diphosphate: step 2/2. This Methanosarcina barkeri (strain Fusaro / DSM 804) protein is Phosphoribosylamine--glycine ligase.